Consider the following 90-residue polypeptide: MKLPIIFLTLLIFVSSCTSTLINGSSDEERTYSFSPTTSPFDPRSLNQELKIGRIGYCFDCARACMRRGKYIRTCSFERKLCRCSISDIK.

An N-terminal signal peptide occupies residues 1–19 (MKLPIIFLTLLIFVSSCTS). Asparagine 23 carries an N-linked (GlcNAc...) asparagine glycan. Intrachain disulfides connect cysteine 58–cysteine 75, cysteine 61–cysteine 82, and cysteine 65–cysteine 84. Residues 67-87 (RRGKYIRTCSFERKLCRCSIS) are PRK6 binding.

This sequence belongs to the DEFL family. As to quaternary structure, interacts with MDIS1, MIK1, MIK2 and TDR/PXY, but not with MDIS2. Binds to PRK6 LRRs. As to expression, expressed in the pistil. Detected exclusively in the synergid cells.

The protein resides in the secreted. Its function is as follows. Pollen tube attractants guiding pollen tubes to the ovular micropyle. Attracts specifically pollen tubes from A.thaliana, but not those from A.lyrata. Triggers endocytosis of MDIS1 in the pollen tube tip. The chain is Protein LURE 1.2 from Arabidopsis thaliana (Mouse-ear cress).